Reading from the N-terminus, the 957-residue chain is Atromentin synthetase (957 aa).

An adenylation (A) domain region spans residues 59 to 464 (SVQARTFQDF…SGRIKDTVIV (406 aa)). The region spanning 596–674 (TPSTDDEKAL…DLAKYVNGLV (79 aa)) is the Carrier domain. Positions 601-671 (DEKALAAIYA…IVSDLAKYVN (71 aa)) are thiolation and peptide carrier (T) domain. Ser633 carries the O-(pantetheine 4'-phosphoryl)serine modification. Positions 697–947 (PIFFVHPGVG…FDHVPQFQKI (251 aa)) are thioesterase (TE) domain.

This sequence belongs to the ATP-dependent AMP-binding enzyme family.

It functions in the pathway secondary metabolite biosynthesis. Its function is as follows. The L-tyrosine:2-oxoglutarate aminotransferase atrD and the atromentin synthetase atrA catalyze consecutive steps to turn over L-tyrosine into atromentin, which represents the generic precursor molecule for the entire terphenylquinone and pulvinic acid family of pigments, which are widely distributed secondary metabolites in homobasidiomycetes. The first step is catalyzed by atrD which converts L-tyrosine in to 4-hydroxyphenylpyruvate (4-HPP). Adenylation of two 4-HPP monomers by the atrA adenylation (A) domain, ester bond formation between monomers and atrA, and symmetric C-C-bond formation between two monomers by atrA leads to atromentin. The sequence is that of Atromentin synthetase from Tapinella panuoides (Oyster rollrim mushroom).